The chain runs to 624 residues: Bifunctional 3'-phosphoadenosine 5'-phosphosulfate synthase 1 (624 aa).

M1 is modified (N-acetylmethionine). The adenylyl-sulfate kinase stretch occupies residues M1–I225. K12 is subject to N6-acetyllysine. G62–T67 lines the ATP pocket. Adenosine 5'-phosphosulfate contacts are provided by residues D89–R92, F101, R106–N109, I132–S133, K171, and G184–F185. ATP contacts are provided by residues C207, C212, Q419–N422, G521–A525, and A563. The interval V234 to A624 is sulfate adenylyltransferase.

It in the N-terminal section; belongs to the APS kinase family. In the C-terminal section; belongs to the sulfate adenylyltransferase family. In terms of assembly, homodimer. Expressed in the neonatal brain and in cartilage.

The catalysed reaction is sulfate + ATP + H(+) = adenosine 5'-phosphosulfate + diphosphate. The enzyme catalyses adenosine 5'-phosphosulfate + ATP = 3'-phosphoadenylyl sulfate + ADP + H(+). It participates in sulfur metabolism; sulfate assimilation. Bifunctional enzyme with both ATP sulfurylase and APS kinase activity, which mediates two steps in the sulfate activation pathway. The first step is the transfer of a sulfate group to ATP to yield adenosine 5'-phosphosulfate (APS), and the second step is the transfer of a phosphate group from ATP to APS yielding 3'-phosphoadenylylsulfate (PAPS: activated sulfate donor used by sulfotransferase). In mammals, PAPS is the sole source of sulfate; APS appears to be only an intermediate in the sulfate-activation pathway. Required for normal biosynthesis of sulfated L-selectin ligands in endothelial cells. The polypeptide is Bifunctional 3'-phosphoadenosine 5'-phosphosulfate synthase 1 (Papss1) (Mus musculus (Mouse)).